Consider the following 331-residue polypeptide: tRNA N6-adenosine threonylcarbamoyltransferase (331 aa).

Positions 108 and 112 each coordinate Fe cation. Substrate contacts are provided by residues 129–133 (LVSGG), D161, E178, and S258. A Fe cation-binding site is contributed by D286.

This sequence belongs to the KAE1 / TsaD family. It depends on Fe(2+) as a cofactor.

The protein resides in the cytoplasm. It carries out the reaction L-threonylcarbamoyladenylate + adenosine(37) in tRNA = N(6)-L-threonylcarbamoyladenosine(37) in tRNA + AMP + H(+). Its function is as follows. Required for the formation of a threonylcarbamoyl group on adenosine at position 37 (t(6)A37) in tRNAs that read codons beginning with adenine. Is probably involved in the transfer of the threonylcarbamoyl moiety of threonylcarbamoyl-AMP (TC-AMP) to the N6 group of A37. The protein is tRNA N6-adenosine threonylcarbamoyltransferase of Caldivirga maquilingensis (strain ATCC 700844 / DSM 13496 / JCM 10307 / IC-167).